The primary structure comprises 221 residues: Protein myomaker (221 aa).

Residues 1–3 (MGT) are Extracellular-facing. A helical transmembrane segment spans residues 4-24 (LVAKLLLPTLSSLAFLPTVSI). The Cytoplasmic segment spans residues 25-34 (AAKRRFHMEA). The chain crosses the membrane as a helical span at residues 35 to 55 (MVYLFTLFFVALHHACNGPGL). Residues 56–64 (SVLCFMRHD) lie on the Extracellular side of the membrane. A helical transmembrane segment spans residues 65 to 85 (ILEYFSVYGTALSMWVSLMAL). Residues 86-92 (ADFDEPK) are Cytoplasmic-facing. A helical membrane pass occupies residues 93 to 110 (RSTFVMFGVLTIAVRIYH). At 111–113 (DRW) the chain is on the extracellular side. Residues 114 to 134 (GYGVYSGPIGTAILIIAAKWL) form a helical membrane-spanning segment. Over 135–153 (QKMKEKKGLYPDKSVYTQQ) the chain is Cytoplasmic. A helical transmembrane segment spans residues 154–174 (IGPGLCFGALALMLRFFFEDW). Residue Asp-175 is a topological domain, extracellular. A helical membrane pass occupies residues 176–196 (YTYVHSFYHCALAMSFVLLLP). Residues 197–221 (KVNKKAGSPGTPAKLDCSTLCCACV) are Cytoplasmic-facing. S-palmitoyl cysteine attachment occurs at residues Cys-217 and Cys-218.

The protein belongs to the TMEM8 family. As to quaternary structure, interacts with MYMX. Post-translationally, palmitoylated at the C-terminus; palmitoylation promotes localization to the Golgi apparatus.

The protein resides in the cell membrane. It is found in the golgi apparatus membrane. Functionally, myoblast-specific protein that mediates myoblast fusion, an essential step for the formation of multi-nucleated muscle fibers. Actively participates in the membrane fusion reaction by mediating the mixing of cell membrane lipids (hemifusion) upstream of MYMX. Acts independently of MYMX. Involved in skeletal muscle regeneration in response to injury by mediating the fusion of satellite cells, a population of muscle stem cells, with injured myofibers. Also involved in skeletal muscle hypertrophy, probably by mediating the fusion of satellite cells with myofibers. The protein is Protein myomaker of Homo sapiens (Human).